The chain runs to 628 residues: Putative serine esterase Mb1866c (628 aa).

Serine 156 serves as the catalytic Acyl-ester intermediate. Active-site charge relay system residues include aspartate 322 and histidine 350.

Belongs to the CocE/NonD hydrolase family.

The protein is Putative serine esterase Mb1866c of Mycobacterium bovis (strain ATCC BAA-935 / AF2122/97).